Consider the following 701-residue polypeptide: Polyribonucleotide nucleotidyltransferase (701 aa).

Mg(2+)-binding residues include Asp489 and Asp495. Residues 556-615 (PRIHTMKIHPDKIREVIGSGGKVIRSITEETGCAIDIEDDGTIRIASSDQASAEQAVKII) form the KH domain. Residues 625–693 (GQVYEGKVVR…RQGRVKLTMK (69 aa)) enclose the S1 motif domain.

It belongs to the polyribonucleotide nucleotidyltransferase family. Mg(2+) is required as a cofactor.

The protein localises to the cytoplasm. It carries out the reaction RNA(n+1) + phosphate = RNA(n) + a ribonucleoside 5'-diphosphate. Functionally, involved in mRNA degradation. Catalyzes the phosphorolysis of single-stranded polyribonucleotides processively in the 3'- to 5'-direction. This is Polyribonucleotide nucleotidyltransferase from Magnetococcus marinus (strain ATCC BAA-1437 / JCM 17883 / MC-1).